The following is a 67-amino-acid chain: Protein AaeX (67 aa).

2 consecutive transmembrane segments (helical) span residues 9 to 29 (IFGL…ALFF) and 47 to 67 (PALF…CLFV).

The protein belongs to the AaeX family.

The protein localises to the cell membrane. The polypeptide is Protein AaeX (Serratia marcescens).